The following is a 214-amino-acid chain: Octanoyltransferase (214 aa).

Residues 28–203 enclose the BPL/LPL catalytic domain; that stretch reads GSGAETLLLL…RFEGFLDEFM (176 aa). Substrate-binding positions include 66–73, 133–135, and 146–148; these read RGGDVTYH, SIG, and GFA. C164 serves as the catalytic Acyl-thioester intermediate.

The protein belongs to the LipB family.

It is found in the cytoplasm. It carries out the reaction octanoyl-[ACP] + L-lysyl-[protein] = N(6)-octanoyl-L-lysyl-[protein] + holo-[ACP] + H(+). It participates in protein modification; protein lipoylation via endogenous pathway; protein N(6)-(lipoyl)lysine from octanoyl-[acyl-carrier-protein]: step 1/2. In terms of biological role, catalyzes the transfer of endogenously produced octanoic acid from octanoyl-acyl-carrier-protein onto the lipoyl domains of lipoate-dependent enzymes. Lipoyl-ACP can also act as a substrate although octanoyl-ACP is likely to be the physiological substrate. In Geotalea uraniireducens (strain Rf4) (Geobacter uraniireducens), this protein is Octanoyltransferase.